The following is a 723-amino-acid chain: Beta-xylosidase (723 aa).

An N-terminal signal peptide occupies residues 1–19; it reads MKKLWLMGLLLASFFTTVA.

This sequence belongs to the glycosyl hydrolase 3 family.

Its subcellular location is the periplasm. In terms of biological role, xylosidase involved in ulvan degradation. Ulvan is the main polysaccharide component of the Ulvales (green seaweed) cell wall. It is composed of disaccharide building blocks comprising 3-sulfated rhamnose (Rha3S) linked to D-glucuronic acid (GlcA), L-iduronic acid (IduA), or D-xylose (Xyl). Beta-xylosidase converts Xyl-Rha3S, a product of alpha-L-rhamnosidase acting on Rha-Xyl-Rha3S oligosaccharides, further to Xyl and Rha3S. The enzyme is able to degrade 4-methylumbelliferyl-beta-D-xylopyranoside (MUX) in vitro. This chain is Beta-xylosidase, found in Formosa agariphila (strain DSM 15362 / KCTC 12365 / LMG 23005 / KMM 3901 / M-2Alg 35-1).